The sequence spans 587 residues: MELLIKQISAFVEDVFEQKGYDKKYGMVTVSDRPDLCQFQCNGALPAAKEYKKAPIQIANDLLPALKNVEIFEEITIAGPGFININVKDSFLAAYVNEMYGSEKLGLEEPAEPQTIIIDYGGANVAKPLHVGHLRAAIIGESLKRISRFVGHKVIGDVHLGDWGLQMGMVISELRRRSPHLPYFDESYEGEYPAEAPFTIDELEDIYPAASKLAKSDAAAMEEAQQATAELQKGRRGYMALWQHILNVSVADLKKGYGNLNVDFDLWNGESDCQKYIDVMVDYLKKNNYTSFSDGLLIVDVAKETDNHVIPPFIVLKTDGSSLYSTTDLATIWERVQDYDPDQIIYVVDKRQELHFEQVFRCAKKTKIAGEDLTLKFLGFGTMNGKDGKPFKTREGGVMRLQDLIQIIKDAVYNKLQENEAIDPSEVDEISRKVGLAALKYGDLSNQITKDYVFDIDRFASFEGNTGPYILYTIVRIKSILRRIAAEGFQASDKIGVPHSDVERSLLLKLSRFNETVEFSFVNHSPNRICDYIYDLANTFNKFYHDTKIISETEFEKKSSWINLITLTMNVLETCLELLGIEAPEKM.

The 'HIGH' region motif lies at 123 to 133; it reads ANVAKPLHVGH.

The protein belongs to the class-I aminoacyl-tRNA synthetase family. In terms of assembly, monomer.

The protein localises to the cytoplasm. It catalyses the reaction tRNA(Arg) + L-arginine + ATP = L-arginyl-tRNA(Arg) + AMP + diphosphate. This Alkaliphilus oremlandii (strain OhILAs) (Clostridium oremlandii (strain OhILAs)) protein is Arginine--tRNA ligase.